A 565-amino-acid polypeptide reads, in one-letter code: NAD-dependent malic enzyme (565 aa).

Y104 functions as the Proton donor in the catalytic mechanism. Residue R157 participates in NAD(+) binding. Catalysis depends on K175, which acts as the Proton acceptor. Positions 246, 247, and 270 each coordinate a divalent metal cation. Residues D270 and N418 each coordinate NAD(+).

The protein belongs to the malic enzymes family. Homotetramer. Requires Mg(2+) as cofactor. It depends on Mn(2+) as a cofactor.

The enzyme catalyses (S)-malate + NAD(+) = pyruvate + CO2 + NADH. The catalysed reaction is oxaloacetate + H(+) = pyruvate + CO2. The protein is NAD-dependent malic enzyme of Salmonella arizonae (strain ATCC BAA-731 / CDC346-86 / RSK2980).